We begin with the raw amino-acid sequence, 329 residues long: Capsular polysaccharide phosphotransferase WcwK (329 aa).

Belongs to the stealth family.

This is Capsular polysaccharide phosphotransferase WcwK (wcwK) from Streptococcus pneumoniae.